Reading from the N-terminus, the 140-residue chain is Putative peptidyl-tRNA hydrolase PTRHD1 (140 aa).

The protein belongs to the PTH2 family. PTRHD1 subfamily.

The enzyme catalyses an N-acyl-L-alpha-aminoacyl-tRNA + H2O = an N-acyl-L-amino acid + a tRNA + H(+). In terms of biological role, as a putative peptidyl-tRNA hydrolase, it might be involved in releasing tRNAs from the ribosome during protein synthesis. Some evidence, however, suggests that it lacks peptidyl-tRNA hydrolase activity. This chain is Putative peptidyl-tRNA hydrolase PTRHD1 (PTRHD1), found in Homo sapiens (Human).